The sequence spans 174 residues: Nascent polypeptide-associated complex subunit alpha (174 aa).

N-acetylserine is present on S2. An NAC-A/B domain is found at 14-78 (NKNEKKAREL…AKVDNFTQKL (65 aa)). Residues 85–137 (AQASGIMPSNEDVATKSPEDIQADMQAAAEGSVNAAAEEDDEEGEVDAGDLNK) are disordered. S93 carries the post-translational modification Phosphoserine. The span at 111-120 (AAAEGSVNAA) shows a compositional bias: low complexity. Residues 121–132 (AEEDDEEGEVDA) are compositionally biased toward acidic residues. In terms of domain architecture, UBA spans 135–174 (LNKDDIELVVQQTNVSKNQAIKALKAHNGDLVNAIMSLSK).

The protein belongs to the NAC-alpha family. In terms of assembly, part of the nascent polypeptide-associated complex (NAC), consisting of EGD2 and either EGD1 or BTT1. NAC associates with ribosomes via EGD1 or BTT1, and with the CCR4-NOT complex.

The protein localises to the cytoplasm. Its subcellular location is the nucleus. Its function is as follows. Component of the nascent polypeptide-associated complex (NAC), a dynamic component of the ribosomal exit tunnel, protecting the emerging polypeptides from interaction with other cytoplasmic proteins to ensure appropriate nascent protein targeting. The NAC complex also promotes mitochondrial protein import by enhancing productive ribosome interactions with the outer mitochondrial membrane and blocks the inappropriate interaction of ribosomes translating non-secretory nascent polypeptides with translocation sites in the membrane of the endoplasmic reticulum. EGD2 may also be involved in transcription regulation. This is Nascent polypeptide-associated complex subunit alpha (EGD2) from Saccharomyces cerevisiae (strain YJM789) (Baker's yeast).